The following is a 67-amino-acid chain: Beta-defensin 1 (67 aa).

An N-terminal signal peptide occupies residues 1-22; sequence MRIHYLLFAVLFLFLMPVPGEG. Intrachain disulfides connect C33–C62, C40–C55, and C45–C63.

As to quaternary structure, monomer. Homodimer. In terms of tissue distribution, highly expressed in tongue, nasopharyngeal mucosa and skin, and to a lower extent in the Eustachian tube, lung and trachea.

The protein localises to the secreted. Its subcellular location is the membrane. Functionally, has antibacterial activity against Gram-positive bacterium S.pneumoniae Serotype 14. Is also active against Gram-negative bacteria M.catarrhalis 1857, and non-typeable H.influenzae strains 86-028NP and 1128. Has antifungal activity against C.albicans. May have a role in maintaining sterility in the middle ear. May act as a ligand for C-C chemokine receptor CCR6. Positively regulates the sperm motility and bactericidal activity in a CCR6-dependent manner. Binds to CCR6 and triggers Ca2+ mobilization in the sperm which is important for its motility. This Chinchilla lanigera (Long-tailed chinchilla) protein is Beta-defensin 1 (DEFB1).